The primary structure comprises 197 residues: Glycerol-3-phosphate acyltransferase (197 aa).

The next 4 helical transmembrane spans lie at 5-25 (LILI…VGKI), 70-90 (LPVL…AVIG), 111-131 (VMLF…FIVL), and 153-173 (IFFT…AFIF).

The protein belongs to the PlsY family. In terms of assembly, probably interacts with PlsX.

It localises to the cell membrane. It carries out the reaction an acyl phosphate + sn-glycerol 3-phosphate = a 1-acyl-sn-glycero-3-phosphate + phosphate. Its pathway is lipid metabolism; phospholipid metabolism. Functionally, catalyzes the transfer of an acyl group from acyl-phosphate (acyl-PO(4)) to glycerol-3-phosphate (G3P) to form lysophosphatidic acid (LPA). This enzyme utilizes acyl-phosphate as fatty acyl donor, but not acyl-CoA or acyl-ACP. The sequence is that of Glycerol-3-phosphate acyltransferase from Geobacillus sp. (strain WCH70).